Reading from the N-terminus, the 215-residue chain is 3-isopropylmalate dehydratase small subunit (215 aa).

Belongs to the LeuD family. LeuD type 1 subfamily. As to quaternary structure, heterodimer of LeuC and LeuD.

The catalysed reaction is (2R,3S)-3-isopropylmalate = (2S)-2-isopropylmalate. Its pathway is amino-acid biosynthesis; L-leucine biosynthesis; L-leucine from 3-methyl-2-oxobutanoate: step 2/4. Its function is as follows. Catalyzes the isomerization between 2-isopropylmalate and 3-isopropylmalate, via the formation of 2-isopropylmaleate. This chain is 3-isopropylmalate dehydratase small subunit, found in Xylella fastidiosa (strain 9a5c).